Here is a 375-residue protein sequence, read N- to C-terminus: MFITEIQLKNYRNYEHLELSFEDKVNVIIGENAQGKTNLMEAIYVLAMAKSHRTSNDRELIRWDEDYGNIKGRLQRRNSSISLELNISKKGKKAKLNQLEQQKLSQYIGEMNVVMFAPEDLNLVKGSPQVRRRFLDMELGQIAPVYLYELSQYQKVLTQRNHLLKKMQGNSKNEETMLDVFTLQLIEHGAKILRKRFEFLHLLQEWAAPIHRGISRGLEELEIVYKPSVDVSESMDLSKIKEVYYESFQSVKQREIFRGTTLLGPHRDDLQFFVNSKNVQVFGSQGQQRTTALSLKLAEIELIYSEVKEYPILLLDDVLSELDDYRQSHLLNTIQGKVQTFVTTTSVEGIEHETLKEAKTIHVTNGTVDCEIDRK.

30–37 serves as a coordination point for ATP; it reads GENAQGKT.

It belongs to the RecF family.

The protein resides in the cytoplasm. The RecF protein is involved in DNA metabolism; it is required for DNA replication and normal SOS inducibility. RecF binds preferentially to single-stranded, linear DNA. It also seems to bind ATP. The protein is DNA replication and repair protein RecF of Bacillus mycoides (strain KBAB4) (Bacillus weihenstephanensis).